The chain runs to 456 residues: MENFSEWYHNILETAGIYDLRYPLKGCGVYLPYGFKIRRYAFEAIRDMLDESNHDEALFPMLIPEDLLAKEGEHIKGFEEEVYWVTHGGTTPLDVKLALRPTSETPIYHMMKLWIKVHTDLPIKIYQIVNSFRYETKHTRPLIRLREIMTFKEAHTAHSTSEEAEAQVQTALNIYKTFFDRMGVPTIVSQRPEWDKFPGADYTMAFDTIFPDGKTMQIGTVHNLGQHFAKTFELEFETPEGGKDYAYQTCYGISDRIIASIIALHGDEKGLILPPEVAPHQIIIIPLLFKGKEEIAMNKAKEIYKSLKNTYRVKLDDRDIRPGKKFNDWELKGAPIRIELGPRDIENNKLTIYRRDTGEKFQIDEDNLLNELNTLIDSIENTIKEKAEQKVKSFITILDNHDVNNIKETLSTKKGVVLVPYDENIYTEEFEEEIDASVLGTTEYDGKKYISIAKTY.

Belongs to the class-II aminoacyl-tRNA synthetase family. ProS type 3 subfamily. Homodimer.

The protein resides in the cytoplasm. It catalyses the reaction tRNA(Pro) + L-proline + ATP = L-prolyl-tRNA(Pro) + AMP + diphosphate. Catalyzes the attachment of proline to tRNA(Pro) in a two-step reaction: proline is first activated by ATP to form Pro-AMP and then transferred to the acceptor end of tRNA(Pro). The sequence is that of Proline--tRNA ligase from Methanococcus aeolicus (strain ATCC BAA-1280 / DSM 17508 / OCM 812 / Nankai-3).